Consider the following 296-residue polypeptide: Lipoyl synthase (296 aa).

[4Fe-4S] cluster-binding residues include C37, C42, C48, C63, C67, C70, and S276. The Radical SAM core domain occupies 49-265 (WSKKHATMMI…ERVARTKGFL (217 aa)).

Belongs to the radical SAM superfamily. Lipoyl synthase family. [4Fe-4S] cluster serves as cofactor.

The protein resides in the cytoplasm. The enzyme catalyses [[Fe-S] cluster scaffold protein carrying a second [4Fe-4S](2+) cluster] + N(6)-octanoyl-L-lysyl-[protein] + 2 oxidized [2Fe-2S]-[ferredoxin] + 2 S-adenosyl-L-methionine + 4 H(+) = [[Fe-S] cluster scaffold protein] + N(6)-[(R)-dihydrolipoyl]-L-lysyl-[protein] + 4 Fe(3+) + 2 hydrogen sulfide + 2 5'-deoxyadenosine + 2 L-methionine + 2 reduced [2Fe-2S]-[ferredoxin]. Its pathway is protein modification; protein lipoylation via endogenous pathway; protein N(6)-(lipoyl)lysine from octanoyl-[acyl-carrier-protein]: step 2/2. Its function is as follows. Catalyzes the radical-mediated insertion of two sulfur atoms into the C-6 and C-8 positions of the octanoyl moiety bound to the lipoyl domains of lipoate-dependent enzymes, thereby converting the octanoylated domains into lipoylated derivatives. This chain is Lipoyl synthase, found in Rickettsia canadensis (strain McKiel).